Here is a 428-residue protein sequence, read N- to C-terminus: Chaperone SurA (428 aa).

The N-terminal stretch at 1–20 (MKNWKTLLLGIAMIANTSFA) is a signal peptide. 2 PpiC domains span residues 171-272 (STEL…KVND) and 282-382 (VTEV…ELLD).

The protein localises to the periplasm. It catalyses the reaction [protein]-peptidylproline (omega=180) = [protein]-peptidylproline (omega=0). Functionally, chaperone involved in the correct folding and assembly of outer membrane proteins. Recognizes specific patterns of aromatic residues and the orientation of their side chains, which are found more frequently in integral outer membrane proteins. May act in both early periplasmic and late outer membrane-associated steps of protein maturation. The sequence is that of Chaperone SurA from Shigella dysenteriae serotype 1 (strain Sd197).